The following is a 210-amino-acid chain: uncharacterized protein (210 aa).

Residues 1–20 (MRVITLSGITLFLLASLASA) form the signal peptide. Residues 21–175 (IELTFKLENQ…YSTVKSTQAR (155 aa)) lie on the Lumenal side of the membrane. A GOLD domain is found at 32-115 (KQCYYLDSFH…DKIVTMEITM (84 aa)). An N-linked (GlcNAc...) asparagine glycan is attached at Asn-165. The chain crosses the membrane as a helical span at residues 176-196 (IFWFSLAESIMVVALSALQVF). At 197–210 (IVKTFFKRSGRRGV) the chain is on the cytoplasmic side.

The protein belongs to the EMP24/GP25L family.

The protein resides in the endoplasmic reticulum membrane. This is an uncharacterized protein from Schizosaccharomyces pombe (strain 972 / ATCC 24843) (Fission yeast).